The sequence spans 337 residues: Fructose-1,6-bisphosphatase class 1 (337 aa).

4 residues coordinate Mg(2+): Glu-90, Asp-112, Leu-114, and Asp-115. Substrate is bound by residues 115-118 (DGSS), Asn-211, and Lys-277. Glu-283 contributes to the Mg(2+) binding site.

This sequence belongs to the FBPase class 1 family. As to quaternary structure, homotetramer. Requires Mg(2+) as cofactor.

The protein localises to the cytoplasm. The catalysed reaction is beta-D-fructose 1,6-bisphosphate + H2O = beta-D-fructose 6-phosphate + phosphate. Its pathway is carbohydrate biosynthesis; gluconeogenesis. This is Fructose-1,6-bisphosphatase class 1 from Azotobacter vinelandii (strain DJ / ATCC BAA-1303).